A 301-amino-acid polypeptide reads, in one-letter code: Probable tRNA pseudouridine synthase B (301 aa).

Residue Asp-54 is the Nucleophile of the active site. Residues Leu-227–Val-301 enclose the PUA domain.

This sequence belongs to the pseudouridine synthase TruB family. Type 2 subfamily.

The enzyme catalyses uridine(55) in tRNA = pseudouridine(55) in tRNA. Could be responsible for synthesis of pseudouridine from uracil-55 in the psi GC loop of transfer RNAs. The sequence is that of Probable tRNA pseudouridine synthase B from Halobacterium salinarum (strain ATCC 29341 / DSM 671 / R1).